Consider the following 1234-residue polypeptide: ATP-dependent helicase/nuclease subunit A (1234 aa).

The 474-residue stretch at 9–482 (STWTDDQWEA…IDLNKNFRSR (474 aa)) folds into the UvrD-like helicase ATP-binding domain. 30–37 (AAAGSGKT) serves as a coordination point for ATP. The 292-residue stretch at 509-800 (QAELKLGASY…RMMTIHSSKG (292 aa)) folds into the UvrD-like helicase C-terminal domain.

The protein belongs to the helicase family. AddA subfamily. Heterodimer of AddA and AddB/RexB. Mg(2+) serves as cofactor.

It carries out the reaction Couples ATP hydrolysis with the unwinding of duplex DNA by translocating in the 3'-5' direction.. It catalyses the reaction ATP + H2O = ADP + phosphate + H(+). In terms of biological role, the heterodimer acts as both an ATP-dependent DNA helicase and an ATP-dependent, dual-direction single-stranded exonuclease. Recognizes the chi site generating a DNA molecule suitable for the initiation of homologous recombination. The AddA nuclease domain is required for chi fragment generation; this subunit has the helicase and 3' -&gt; 5' nuclease activities. This is ATP-dependent helicase/nuclease subunit A from Bacillus pumilus (strain SAFR-032).